A 902-amino-acid chain; its full sequence is Glutamate receptor 4 (902 aa).

The first 20 residues, 1–20 (MRIICRQIVLLFSGFWGLAM), serve as a signal peptide directing secretion. Residues 22 to 544 (AFPSSVQIGG…GVFSFLDPLA (523 aa)) are Extracellular-facing. 6 N-linked (GlcNAc...) asparagine glycosylation sites follow: asparagine 52, asparagine 56, asparagine 258, asparagine 371, asparagine 407, and asparagine 414. Cysteine 84 and cysteine 331 are oxidised to a cystine. The L-glutamate site is built by proline 500, threonine 502, and arginine 507. A helical membrane pass occupies residues 545-565 (YEIWMCIVFAYIGVSVVLFLV). Residues 566–592 (SRFSPYEWHTEEPEDGKEGPSDQPPNE) lie on the Cytoplasmic side of the membrane. The helical; Pore-forming intramembrane region spans 593–608 (FGIFNSLWFSLGAFMQ). The stretch at 609 to 611 (QGC) is an intramembrane region. Cysteine 611 carries S-palmitoyl cysteine lipidation. Residues 612 to 617 (DISPRS) are Cytoplasmic-facing. A helical membrane pass occupies residues 618 to 638 (LSGRIVGGVWWFFTLIIISSY). Topologically, residues 639–813 (TANLAAFLTV…DKTSALSLSN (175 aa)) are extracellular. L-glutamate-binding residues include serine 676, threonine 677, and glutamate 727. An intrachain disulfide couples cysteine 740 to cysteine 795. The helical transmembrane segment at 814–834 (VAGVFYILVGGLGLAMLVALI) threads the bilayer. Residues 835-902 (EFCYKSRAEA…GLAVIASDLP (68 aa)) lie on the Cytoplasmic side of the membrane. Cysteine 837 carries the S-palmitoyl cysteine lipid modification. Phosphoserine; by PKC/PRKCG is present on serine 862.

This sequence belongs to the glutamate-gated ion channel (TC 1.A.10.1) family. GRIA4 subfamily. Homotetramer or heterotetramer of pore-forming glutamate receptor subunits. Tetramers may be formed by the dimerization of dimers. Interacts with EPB41L1 via its C-terminus. Isoform 3 interacts with PICK1. Found in a complex with GRIA1, GRIA2, GRIA3, CNIH2, CNIH3, CACNG2, CACNG3, CACNG4, CACNG5, CACNG7 and CACNG8. Interacts with CACNG5 and PRKCG. Found in a complex with GRIA1, GRIA2, GRIA3, DLG4, CACNG8 and CNIH2. Palmitoylated. Depalmitoylated upon L-glutamate stimulation. ZDHHC3/GODZ specifically palmitoylates Cys-611, which leads to Golgi retention and decreased cell surface expression. In contrast, Cys-837 palmitoylation does not affect cell surface expression but regulates stimulation-dependent endocytosis. Post-translationally, phosphorylated at Ser-862 by PRKCG; phosphorylation increases plasma membrane-associated GRI4 expression. In terms of tissue distribution, detected in cerebellum.

It is found in the cell membrane. The protein localises to the postsynaptic cell membrane. It localises to the cell projection. Its subcellular location is the dendrite. It carries out the reaction Ca(2+)(in) = Ca(2+)(out). The catalysed reaction is Na(+)(in) = Na(+)(out). It catalyses the reaction Mg(2+)(in) = Mg(2+)(out). Functionally, ionotropic glutamate receptor that functions as a ligand-gated cation channel, gated by L-glutamate and glutamatergic agonists such as alpha-amino-3-hydroxy-5-methyl-4-isoxazolepropionic acid (AMPA), quisqualic acid, and kainic acid. L-glutamate acts as an excitatory neurotransmitter at many synapses in the central nervous system and plays an important role in fast excitatory synaptic transmission. Binding of the excitatory neurotransmitter L-glutamate induces a conformation change, leading to the opening of the cation channel, and thereby converts the chemical signal to an electrical impulse upon entry of monovalent and divalent cations such as sodium and calcium. The receptor then desensitizes rapidly and enters a transient inactive state, characterized by the presence of bound agonist. In the presence of CACNG8, shows resensitization which is characterized by a delayed accumulation of current flux upon continued application of L-glutamate. The sequence is that of Glutamate receptor 4 from Rattus norvegicus (Rat).